A 292-amino-acid polypeptide reads, in one-letter code: uncharacterized protein (292 aa).

Residues 13 to 35 (LFILFIIVVCIYLLPRVAINAFY) traverse the membrane as a helical segment.

This sequence belongs to the serine esterase family.

Its subcellular location is the membrane. This is an uncharacterized protein from Salmonella typhimurium (strain LT2 / SGSC1412 / ATCC 700720).